We begin with the raw amino-acid sequence, 477 residues long: Ankyrin repeat, SAM and basic leucine zipper domain-containing protein 1 (477 aa).

A disordered region spans residues 1-24 (MATSALRGLAVAGGGESSESEDDG). Phosphoserine is present on residues serine 17, serine 18, and serine 20. ANK repeat units lie at residues 46-76 (EKKEKFKKALTTGDVSLVQELLDSGIISVDA), 80-109 (YGWTPLMYAASVANAELVRVLLDRGANASF), 112-146 (DKQTILITACSAHGSEEQILKCVELLLSRNADPNV), 150-179 (RLMTPIMYAARDGHTQVVALLVASGAEVNT), 183-212 (NGYTALTWAARQGHKSIVLKLLELGANKML), and 216-245 (DGKLPSEIAKRNKHHEIFNLLSFTLNPLEG). An SAM domain is found at 274 to 336 (SYAEFGDLEV…KILAALKELE (63 aa)).

In terms of assembly, interacts with DDX4, PIWIL1, RANBP9 and TDRD1.

Its subcellular location is the cytoplasm. In terms of biological role, plays a central role during spermatogenesis by repressing transposable elements and preventing their mobilization, which is essential for the germline integrity. Acts via the piRNA metabolic process, which mediates the repression of transposable elements during meiosis by forming complexes composed of piRNAs and Piwi proteins and governs the methylation and subsequent repression of transposons. Its association with pi-bodies suggests a participation in the primary piRNAs metabolic process. Required prior to the pachytene stage to facilitate the production of multiple types of piRNAs, including those associated with repeats involved in the regulation of retrotransposons. May act by mediating protein-protein interactions during germ cell maturation. The protein is Ankyrin repeat, SAM and basic leucine zipper domain-containing protein 1 (ASZ1) of Saimiri boliviensis boliviensis (Bolivian squirrel monkey).